The primary structure comprises 220 residues: MSDENLLTTLDTYLASGIHIGTQQKTEDMRRFIYRVRADGLYVLDVRKTDERLRLAAKFLSNYEPEDIMAVTRRVYSVGPLKEFGKVTGINTVAGRFVPGTLTNPSARKFAEPEVLFLSDPRVDKQALKEAIEIGIPVIGMCDTEHLTAHIDFIIPTNNKGRKSVSLMYYLIAREYMKNRGLIGEEAPFSYDQFLEKAMNVKVKMNPSNRQRGRFHRRRR.

It belongs to the universal ribosomal protein uS2 family.

This chain is Small ribosomal subunit protein uS2, found in Methanococcus maripaludis (strain DSM 14266 / JCM 13030 / NBRC 101832 / S2 / LL).